The chain runs to 278 residues: Undecaprenyl-diphosphatase (278 aa).

A run of 8 helical transmembrane segments spans residues 14–34, 40–60, 89–109, 121–141, 153–173, 196–216, 227–247, and 257–277; these read GTTEFLPISSSAHLIVLPWLF, GLAFNVALHLGTLSAVLAYFW, WAVIIGSLPAGLAGFFLNDVI, TAIVFTSLLLIVLGFVLWLAE, LGLRDGLVVGLAQALALLPGV, FSFILGIPAIAGAGLLETLKL, VLFVTGVASAAITGFLAIAFL, and SIFIVYRIALGLVLLLVVSFA.

Belongs to the UppP family.

It localises to the cell membrane. It catalyses the reaction di-trans,octa-cis-undecaprenyl diphosphate + H2O = di-trans,octa-cis-undecaprenyl phosphate + phosphate + H(+). Its function is as follows. Catalyzes the dephosphorylation of undecaprenyl diphosphate (UPP). Confers resistance to bacitracin. The protein is Undecaprenyl-diphosphatase of Thermomicrobium roseum (strain ATCC 27502 / DSM 5159 / P-2).